The primary structure comprises 56 residues: Large ribosomal subunit protein bL33 (56 aa).

This sequence belongs to the bacterial ribosomal protein bL33 family.

The protein is Large ribosomal subunit protein bL33 of Campylobacter hominis (strain ATCC BAA-381 / DSM 21671 / CCUG 45161 / LMG 19568 / NCTC 13146 / CH001A).